A 465-amino-acid chain; its full sequence is Chromosomal replication initiator protein DnaA (465 aa).

The tract at residues 1–72 is domain I, interacts with DnaA modulators; it reads MRTKQLWQVA…ETLSLLLGRP (72 aa). The interval 72 to 117 is domain II; the sequence is PIAVHFTVHGQDDEEHPVQRRPQRRALASEEGSASKQLSLTPSPEH. Residues 80–118 form a disordered region; it reads HGQDDEEHPVQRRPQRRALASEEGSASKQLSLTPSPEHG. Residues 103 to 113 are compositionally biased toward polar residues; that stretch reads GSASKQLSLTP. The segment at 118-334 is domain III, AAA+ region; it reads GLNPRYTFEK…GALNRIVALA (217 aa). ATP is bound by residues Gly162, Gly164, Lys165, and Thr166. Positions 335 to 465 are domain IV, binds dsDNA; sequence QLTHQPITLA…DAKAPLASRH (131 aa).

It belongs to the DnaA family. In terms of assembly, oligomerizes as a right-handed, spiral filament on DNA at oriC.

It is found in the cytoplasm. Plays an essential role in the initiation and regulation of chromosomal replication. ATP-DnaA binds to the origin of replication (oriC) to initiate formation of the DNA replication initiation complex once per cell cycle. Binds the DnaA box (a 9 base pair repeat at the origin) and separates the double-stranded (ds)DNA. Forms a right-handed helical filament on oriC DNA; dsDNA binds to the exterior of the filament while single-stranded (ss)DNA is stabiized in the filament's interior. The ATP-DnaA-oriC complex binds and stabilizes one strand of the AT-rich DNA unwinding element (DUE), permitting loading of DNA polymerase. After initiation quickly degrades to an ADP-DnaA complex that is not apt for DNA replication. Binds acidic phospholipids. This chain is Chromosomal replication initiator protein DnaA, found in Thermomicrobium roseum (strain ATCC 27502 / DSM 5159 / P-2).